Consider the following 68-residue polypeptide: Acylphosphatase (68 aa).

Positions 3–68 (RIACTVHGRV…RCTAGLPSAP (66 aa)) constitute an Acylphosphatase-like domain. Active-site residues include R18 and N36.

Belongs to the acylphosphatase family.

It carries out the reaction an acyl phosphate + H2O = a carboxylate + phosphate + H(+). In Oleidesulfovibrio alaskensis (strain ATCC BAA-1058 / DSM 17464 / G20) (Desulfovibrio alaskensis), this protein is Acylphosphatase (acyP).